The sequence spans 218 residues: Small ribosomal subunit protein uS3c (218 aa).

The region spanning 47-118 is the KH type-2 domain; that stretch reads VQKNIRISSG…KLNIAITRIS (72 aa).

Belongs to the universal ribosomal protein uS3 family. In terms of assembly, part of the 30S ribosomal subunit.

It is found in the plastid. The protein resides in the chloroplast. This Crucihimalaya wallichii (Rock-cress) protein is Small ribosomal subunit protein uS3c (rps3).